The sequence spans 405 residues: L-rhamnonate dehydratase (405 aa).

Substrate is bound by residues His-33 and Arg-59. Mg(2+) is bound by residues Asp-226, Glu-252, and Glu-280. The active-site Proton acceptor is His-329. Glu-349 is a binding site for substrate.

It belongs to the mandelate racemase/muconate lactonizing enzyme family. RhamD subfamily. Homooctamer; tetramer of dimers. Mg(2+) is required as a cofactor.

It catalyses the reaction L-rhamnonate = 2-dehydro-3-deoxy-L-rhamnonate + H2O. In terms of biological role, catalyzes the dehydration of L-rhamnonate to 2-keto-3-deoxy-L-rhamnonate (KDR). The polypeptide is L-rhamnonate dehydratase (Escherichia coli (strain K12 / DH10B)).